A 224-amino-acid chain; its full sequence is 7-cyano-7-deazaguanine synthase (224 aa).

Residue 9-19 participates in ATP binding; that stretch reads ISGGMDSTLCA. 4 residues coordinate Zn(2+): C190, C198, C201, and C204.

Belongs to the QueC family. Requires Zn(2+) as cofactor.

It catalyses the reaction 7-carboxy-7-deazaguanine + NH4(+) + ATP = 7-cyano-7-deazaguanine + ADP + phosphate + H2O + H(+). It functions in the pathway purine metabolism; 7-cyano-7-deazaguanine biosynthesis. Functionally, catalyzes the ATP-dependent conversion of 7-carboxy-7-deazaguanine (CDG) to 7-cyano-7-deazaguanine (preQ(0)). The protein is 7-cyano-7-deazaguanine synthase of Campylobacter jejuni (strain RM1221).